The sequence spans 209 residues: Small ribosomal subunit protein uS4 (209 aa).

The region spanning 99-159 is the S4 RNA-binding domain; sequence SRLDSVCYRM…EKSKAQLRIK (61 aa).

This sequence belongs to the universal ribosomal protein uS4 family. Part of the 30S ribosomal subunit. Contacts protein S5. The interaction surface between S4 and S5 is involved in control of translational fidelity.

Functionally, one of the primary rRNA binding proteins, it binds directly to 16S rRNA where it nucleates assembly of the body of the 30S subunit. Its function is as follows. With S5 and S12 plays an important role in translational accuracy. The protein is Small ribosomal subunit protein uS4 of Thiobacillus denitrificans (strain ATCC 25259 / T1).